Reading from the N-terminus, the 294-residue chain is Tetraspanin-15 (294 aa).

Residues 1–23 (MPRGDSEQVRYCARFSYLWLKFS) lie on the Cytoplasmic side of the membrane. A helical membrane pass occupies residues 24-44 (LIIYSTVFWLIGGLVLSVGIY). Residues 45-62 (AEAERQKYKTLESAFLAP) are Extracellular-facing. Residues 63 to 83 (AIILILLGVVMFIVSFIGVLA) form a helical membrane-spanning segment. Topologically, residues 84–94 (SLRDNLCLLQS) are cytoplasmic. Residues 95 to 115 (FMYILGICLVMELIGGIVALI) form a helical membrane-spanning segment. Topologically, residues 116-235 (FRNQTIDFLN…WFMDNYTIMA (120 aa)) are extracellular. Asn-118 carries an N-linked (GlcNAc...) asparagine glycan. 4 disulfide bridges follow: Cys-154/Cys-219, Cys-155/Cys-185, Cys-171/Cys-179, and Cys-186/Cys-198. Residues Asn-189 and Asn-230 are each glycosylated (N-linked (GlcNAc...) asparagine). The chain crosses the membrane as a helical span at residues 236-256 (GLLLGILLPQFLGVLLTLLYI). The Cytoplasmic segment spans residues 257 to 294 (TRVEDIILEHSVTDGLLGPGAKSRTDTAGTGCCLCYPD).

Belongs to the tetraspanin (TM4SF) family. In terms of assembly, interacts with ADAM10; the interaction influences ADAM10 substrate specificity, endocytosis and turnover. Palmitoylated.

It is found in the cell membrane. Its subcellular location is the late endosome membrane. Its function is as follows. Part of TspanC8 subgroup, composed of 6 members that interact with the transmembrane metalloprotease ADAM10. This interaction is required for ADAM10 exit from the endoplasmic reticulum and for enzymatic maturation and trafficking to the cell surface as well as substrate specificity. Different TspanC8/ADAM10 complexes have distinct substrates. Promotes ADAM10-mediated cleavage of CDH2. Negatively regulates ligand-induced Notch activity probably by regulating ADAM10 activity. The polypeptide is Tetraspanin-15 (Tspan15) (Mus musculus (Mouse)).